The primary structure comprises 278 residues: Undecaprenyl-diphosphatase (278 aa).

6 helical membrane-spanning segments follow: residues 49–69 (ANTF…VVFW), 97–117 (HVLI…DFID), 120–140 (LFSI…MIAA), 197–217 (ADFT…LSLV), 226–246 (GDLG…LLSI), and 258–278 (LVPF…IVYM).

Belongs to the UppP family.

It localises to the cell membrane. It carries out the reaction di-trans,octa-cis-undecaprenyl diphosphate + H2O = di-trans,octa-cis-undecaprenyl phosphate + phosphate + H(+). Functionally, catalyzes the dephosphorylation of undecaprenyl diphosphate (UPP). Confers resistance to bacitracin. This chain is Undecaprenyl-diphosphatase, found in Exiguobacterium sibiricum (strain DSM 17290 / CCUG 55495 / CIP 109462 / JCM 13490 / 255-15).